Reading from the N-terminus, the 190-residue chain is Glycerol-3-phosphate acyltransferase 2 (190 aa).

5 helical membrane passes run 1 to 21 (MNILTLILSYLIGSISFALIV), 53 to 73 (VIVAIADILKGTFACLLPLIL), 76 to 96 (TINPIVCGLLAILGHIFSVFA), 110 to 130 (VFLFLSPLGVLVGFVVFVLTL), and 152 to 172 (LIFEDKVIIALSLLIIVSIII).

This sequence belongs to the PlsY family. As to quaternary structure, probably interacts with PlsX.

Its subcellular location is the cell membrane. It catalyses the reaction an acyl phosphate + sn-glycerol 3-phosphate = a 1-acyl-sn-glycero-3-phosphate + phosphate. The protein operates within lipid metabolism; phospholipid metabolism. Its function is as follows. Catalyzes the transfer of an acyl group from acyl-phosphate (acyl-PO(4)) to glycerol-3-phosphate (G3P) to form lysophosphatidic acid (LPA). This enzyme utilizes acyl-phosphate as fatty acyl donor, but not acyl-CoA or acyl-ACP. This is Glycerol-3-phosphate acyltransferase 2 from Bacillus anthracis.